Here is a 1128-residue protein sequence, read N- to C-terminus: Major DNA-binding protein (1128 aa).

The required for nuclear localization stretch occupies residues 1104-1128; it reads LGGGGQGSGGRRKRRLATVLPGLEV.

The protein belongs to the herpesviridae major DNA-binding protein family. As to quaternary structure, homooligomers. Forms double-helical filaments necessary for the formation of replication compartments within the host nucleus. Interacts with the origin-binding protein. Interacts with the helicase primase complex; this interaction stimulates primer synthesis activity of the helicase-primase complex. Interacts with the DNA polymerase. Interacts with the alkaline exonuclease; this interaction increases its nuclease processivity.

It is found in the virion tegument. Its subcellular location is the host nucleus. Functionally, plays several crucial roles in viral infection. Participates in the opening of the viral DNA origin to initiate replication by interacting with the origin-binding protein. May disrupt loops, hairpins and other secondary structures present on ssDNA to reduce and eliminate pausing of viral DNA polymerase at specific sites during elongation. Promotes viral DNA recombination by performing strand-transfer, characterized by the ability to transfer a DNA strand from a linear duplex to a complementary single-stranded DNA circle. Can also catalyze the renaturation of complementary single strands. Additionally, reorganizes the host cell nucleus, leading to the formation of prereplicative sites and replication compartments. This process is driven by the protein which can form double-helical filaments in the absence of DNA. The polypeptide is Major DNA-binding protein (Homo sapiens (Human)).